The primary structure comprises 282 residues: MKELVILTGHSGAGKSTAAGLLEDLGFFCIDNLPPEVVYQVASILSNNVDKLAIVLDIRSYLFGNIQNAIKDVKERYPFTKVLFLTAAKDTLIQRFAHTRRSHPLSKQTNSIGEAIELEFEIMKEIMEIADLVIDTTMLNPHQLRTKLTTFLEEKSEKTFVVHVISFGFKYGMPLDADFVFDARFFPNPFYINELRPKTGKDEEVKEFLRKIDGVSEYLNKIYELINIAISRYETEGRKEITVAIGCTGGKHRSVYFAEELGQMFLNKDYKVTIEHRDVELG.

9 to 16 (GHSGAGKS) contributes to the ATP binding site. A GTP-binding site is contributed by 57–60 (DIRS).

The protein belongs to the RapZ-like family.

Displays ATPase and GTPase activities. This chain is Nucleotide-binding protein Fnod_1159, found in Fervidobacterium nodosum (strain ATCC 35602 / DSM 5306 / Rt17-B1).